Reading from the N-terminus, the 556-residue chain is 2-isopropylmalate synthase (556 aa).

The region spanning 33-307 (PIWCSSDLRD…NPGLDFSDID (275 aa)) is the Pyruvate carboxyltransferase domain. The Mg(2+) site is built by D42, H246, H248, and N282. The tract at residues 439–556 (ANVPYALISH…SLSQTQAKAA (118 aa)) is regulatory domain.

The protein belongs to the alpha-IPM synthase/homocitrate synthase family. LeuA type 2 subfamily. As to quaternary structure, homodimer. It depends on Mg(2+) as a cofactor.

Its subcellular location is the cytoplasm. The enzyme catalyses 3-methyl-2-oxobutanoate + acetyl-CoA + H2O = (2S)-2-isopropylmalate + CoA + H(+). Its pathway is amino-acid biosynthesis; L-leucine biosynthesis; L-leucine from 3-methyl-2-oxobutanoate: step 1/4. In terms of biological role, catalyzes the condensation of the acetyl group of acetyl-CoA with 3-methyl-2-oxobutanoate (2-ketoisovalerate) to form 3-carboxy-3-hydroxy-4-methylpentanoate (2-isopropylmalate). This is 2-isopropylmalate synthase from Pseudomonas syringae pv. syringae (strain B728a).